We begin with the raw amino-acid sequence, 283 residues long: 4-diphosphocytidyl-2-C-methyl-D-erythritol kinase (283 aa).

Residue Lys13 is part of the active site. An ATP-binding site is contributed by 96–106; sequence PMGGGIGGGSS. Asp138 is an active-site residue.

Belongs to the GHMP kinase family. IspE subfamily.

The enzyme catalyses 4-CDP-2-C-methyl-D-erythritol + ATP = 4-CDP-2-C-methyl-D-erythritol 2-phosphate + ADP + H(+). It functions in the pathway isoprenoid biosynthesis; isopentenyl diphosphate biosynthesis via DXP pathway; isopentenyl diphosphate from 1-deoxy-D-xylulose 5-phosphate: step 3/6. Catalyzes the phosphorylation of the position 2 hydroxy group of 4-diphosphocytidyl-2C-methyl-D-erythritol. In Pseudomonas fluorescens (strain Pf0-1), this protein is 4-diphosphocytidyl-2-C-methyl-D-erythritol kinase.